The following is a 256-amino-acid chain: GTP cyclohydrolase FolE2 (256 aa).

This sequence belongs to the GTP cyclohydrolase IV family.

It carries out the reaction GTP + H2O = 7,8-dihydroneopterin 3'-triphosphate + formate + H(+). Its pathway is cofactor biosynthesis; 7,8-dihydroneopterin triphosphate biosynthesis; 7,8-dihydroneopterin triphosphate from GTP: step 1/1. Its function is as follows. Converts GTP to 7,8-dihydroneopterin triphosphate. This is GTP cyclohydrolase FolE2 from Maridesulfovibrio salexigens (strain ATCC 14822 / DSM 2638 / NCIMB 8403 / VKM B-1763) (Desulfovibrio salexigens).